The following is a 1450-amino-acid chain: MAEAGDAALSVAEWLRALHLEQYTGLFEQHGLVWATECQGLSDTRLMDMGMLLPGHRRRILAGLLRAHTSPAPAPRPTPRPVPMKRHIFRSPPVPATPPEPLPTTTEDEGLPAAPPIPPRRSCLPPTCFTTPSTAAPDPVLPPLPAKRHLAELSVPPVPPRTGPPRLLVSLPTKEEESLLPSLSSPPQPQSEEPLSTLPQGPPQPPSPPPCPPEIPPKPVRLFPEFDDSDYDEVPEEGPGAPARVMTKKEEPPPSRVPRAVRVASLLSEGEELSGDDQGDEEEDDHAYEGVPNGGWHTSSLSLSLPSTIAAPHPMDGPPGGSTPVTPVIKAGWLDKNPPQGSYIYQKRWVRLDTDHLRYFDSNKDAYSKRFISVACISHVAAIGDQKFEVITNNRTFAFRAESDVERKEWMQALQQAMAEQRARARLSSAYLLGVPGSEQPDRAGSLELRGFKNKLYVAVVGDKVQLYKNLEEYHLGIGITFIDMSVGNVKEVDRRSFDLTTPYRIFSFSADSELEKEQWLEAMQGAIAEALSTSEVAERIWAAAPNRFCADCGAPQPDWASINLCVVICKRCAGEHRGLGAGVSKVRSLKMDRKVWTETLIELFLQLGNGAGNRFWAANVPPSEALQPSSSPSTRRCHLEAKYREGKYRRYHPLFGNQEELDKALCAAVTTTDLAETQALLGCGAGINCFSGDPEAPTPLALAEQAGQTLQMEFLRNNRTTEVPRLDSMKPLEKHYSVVLPTVSHSGFLYKTASAGKLLQDRRAREEFSRRWCVLGDGVLSYFENERAVTPNGEIRASEIVCLAVPPPDTHGFEHTFEVYTEGERLYLFGLESAEQAHEWVKCIAKAFVPPLAEDLLARDFERLGRLPYKAGLSLQRAQEGWFSLSGSELRAVFPEGPCEEPLQLRKLQELSIQGDSENQVLVLVERRRTLYIQGERRLDFMGWLGAIQKAAASMGDTLSEQQLGDSDIPVIVYRCVDYITQCGLTSEGIYRKCGQTSKTQRLLESLRQDARSVHLKEGEQHVDDVSSALKRFLRDLPDGLFTRAQRLTWLEASEIEDEEEKVSRYRELLVRLPPVNRATVKALISHLYCVQCFSDTNQMNVHNLAIVFGPTLFQTDGQDYKAGRVVEDLINHYVVVFSVDEEELRKQREEITAIVKMRVAGTASGTQHAGDFICTVYLEEKKAETEQHIKVPASMTAEELTLEILDRRNVGIREKDYWTCFEVNEREEAERPLHFAEKVLPILHGLGTDSHLVVKKHQAMEAMLLYLASRVGDTKHGMMKFREDRSLLGLGLPSGGFHDRYFILNSSCLRLYKEVRSQRPWSGAPETSHRPEKEWPIKSLKVYLGVKKKLRPPTCWGFTVVHETEKHEKQQWYLCCDTQMELREWFATFLFVQHDGLVWPSEPSRVSRAVPEVRLGSVSLIPLRGSENEMRRSVAAFTADPLSLLRNV.

The region spanning 6-70 (DAALSVAEWL…LAGLLRAHTS (65 aa)) is the SAM domain. The interval 81 to 90 (PVPMKRHIFR) is required for interaction with SH3KBP1. Disordered stretches follow at residues 89–144 (FRSP…LPPL) and 173–302 (TKEE…SSLS). Residues 92–102 (PPVPATPPEPL) are compositionally biased toward pro residues. Residues 190–199 (QSEEPLSTLP) show a composition bias toward low complexity. Over residues 200–219 (QGPPQPPSPPPCPPEIPPKP) the composition is skewed to pro residues. 2 stretches are compositionally biased toward acidic residues: residues 225 to 236 (EFDDSDYDEVPE) and 269 to 286 (EGEE…EDDH). At serine 229 the chain carries Phosphoserine. Position 231 is a phosphotyrosine; by PTK6 (tyrosine 231). The PH 1 domain occupies 327–419 (PVIKAGWLDK…WMQALQQAMA (93 aa)). Threonine 354 carries the phosphothreonine modification. A Phosphoserine modification is found at serine 428. Tyrosine 431 and tyrosine 504 each carry phosphotyrosine. The region spanning 440-529 (QPDRAGSLEL…WLEAMQGAIA (90 aa)) is the PH 2 domain. Positions 535 to 660 (SEVAERIWAA…RYHPLFGNQE (126 aa)) constitute an Arf-GAP domain. Residues 550–576 (CADCGAPQPDWASINLCVVICKRCAGE) form a C4-type zinc finger. At serine 738 the chain carries Phosphoserine. The 108-residue stretch at 743–850 (TVSHSGFLYK…WVKCIAKAFV (108 aa)) folds into the PH 3 domain. Positions 954-1139 (ASMGDTLSEQ…DLINHYVVVF (186 aa)) constitute a Rho-GAP domain. A Ras-associating domain is found at 1172-1261 (GDFICTVYLE…SHLVVKKHQA (90 aa)). The PH 4 domain occupies 1274–1396 (GDTKHGMMKF…WFATFLFVQH (123 aa)). Phosphoserine is present on residues serine 1428 and serine 1435.

As to quaternary structure, interacts with SH3KBP1/CIN85 (via SH3 domains). The interaction is independent of EGF and does not affect ARAP1 GTPase-activating activity but is involved in regulating ubiquitination and endocytic trafficking of EGFR. ARAP1 competes with E3 ubiquitin-protein ligase CBL for binding to SH3KBP1, preventing interaction of CBL with SH3KBP1; this is likely to regulate SH3KBP1-mediated internalization of EGFR. Interacts with TNFRSF10A. In terms of processing, phosphorylated by PTK6 following EGF stimulation which enhances EGFR signaling by delaying EGFR down-regulation; the interaction is mediated by the SH2 domain of PTK6. Phosphorylation promotes association with the Golgi apparatus and endosomes. Detected in heart, skeletal muscle, spleen, kidney, liver, placenta, lung, peripheral blood leukocytes, adrenal gland, bone marrow, brain, lymph node, mammary gland, prostate, spinal cord, stomach, thyroid and trachea.

It is found in the cytoplasm. The protein resides in the golgi apparatus. The protein localises to the trans-Golgi network. Its subcellular location is the golgi stack. It localises to the cell membrane. It is found in the endosome. The protein resides in the multivesicular body. The protein localises to the cell projection. Its subcellular location is the ruffle. It localises to the podosome. It is found in the early endosome. In terms of biological role, phosphatidylinositol 3,4,5-trisphosphate-dependent GTPase-activating protein that modulates actin cytoskeleton remodeling by regulating ARF and RHO family members. Activated by phosphatidylinositol 3,4,5-trisphosphate (PtdIns(3,4,5)P3) binding and, to a lesser extent, by phosphatidylinositol 3,4-bisphosphate (PtdIns(3,4)P2) binding. Has a preference for ARF1 and ARF5. Positively regulates the ring size of circular dorsal ruffles and promotes macropinocytosis. Acts as a bridging factor in osteoclasts to control actin and membrane dynamics. Regulates the condensing of osteoclast podosomes into sealing zones which segregate the bone-facing membrane from other membrane domains and are required for osteoclast resorption activity. Also regulates recruitment of the AP-3 complex to endosomal membranes and trafficking of lysosomal membrane proteins to the ruffled membrane border of osteoclasts to modulate bone resorption. Regulates the endocytic trafficking of EGFR. Regulates the incorporation of CD63 and CD9 into multivesicular bodies. Required in the retinal pigment epithelium (RPE) for photoreceptor survival due to its role in promoting RPE phagocytosis. This is Arf-GAP with Rho-GAP domain, ANK repeat and PH domain-containing protein 1 (ARAP1) from Homo sapiens (Human).